The sequence spans 83 residues: Mu-theraphotoxin-Hhn2i (83 aa).

Residues 1–21 (MKASMFLALAGLVLLFVVGYA) form the signal peptide. The propeptide occupies 22 to 48 (SESEEKEFPRELLSKIFAVDDFKGEER). 3 cysteine pairs are disulfide-bonded: C50–C65, C57–C70, and C64–C77. L81 is modified (leucine amide).

Belongs to the neurotoxin 10 (Hwtx-1) family. 15 (Hntx-3) subfamily. Monomer. Expressed by the venom gland.

It is found in the secreted. Lethal neurotoxin. Selectively blocks tetrodotoxin-sensitive voltage-gated sodium channels (Nav). Does not affect tetrodotoxin-resistant voltage-gated sodium channels or calcium channels. In Cyriopagopus hainanus (Chinese bird spider), this protein is Mu-theraphotoxin-Hhn2i.